A 611-amino-acid polypeptide reads, in one-letter code: Sodium-coupled monocarboxylate transporter 1 (611 aa).

At 1 to 9 (MDASRDIGS) the chain is on the extracellular side. Residues 10–30 (FVVWDYVVFAGMLLISAAIGI) traverse the membrane as a helical segment. The Cytoplasmic portion of the chain corresponds to 31–51 (YYAFAGGGQQTSKDFLMGGRS). The chain crosses the membrane as a helical span at residues 52–72 (MSAVPVALSLTASFMSAVTVL). The Extracellular segment spans residues 73–86 (GTPAEVYRFGAIFS). Residues 87–107 (IFVITYFFVVVISAEVFLPVF) form a helical membrane-spanning segment. The Cytoplasmic segment spans residues 108 to 132 (YRLGITSTYEYLELRFNRCIRLCGT). A helical membrane pass occupies residues 133–153 (ILFIVQTILYTGIVIYAPALA). At 154-161 (LNQVTGFD) the chain is on the extracellular side. The helical transmembrane segment at 162–182 (LWGAVVATGVVCTFYCTLGGL) threads the bilayer. At 183–184 (KA) the chain is on the cytoplasmic side. Residues 185–205 (VVWTDVFQVGIMVAGFASVII) form a helical membrane-spanning segment. At 206 to 239 (QASITQHGINKILSDAFNGGRLNFWNFDPNPLQR) the chain is on the extracellular side. Residues 240-260 (HTFWTIVIGGTFTWTTIYGVN) form a helical membrane-spanning segment. At 261-279 (QSQVQRYISCKSRLHAKLS) the chain is on the cytoplasmic side. The chain crosses the membrane as a helical span at residues 280 to 300 (LYVNLVGLWVILTCSIFCGLA). Topologically, residues 301–336 (LYSRYRECDPWTSKKVSAIDQLMPYLVLDILKNYPG) are extracellular. The chain crosses the membrane as a helical span at residues 337–359 (VPGLFVACAYSGTLSTVSSSINA). The Cytoplasmic segment spans residues 360-389 (LAAVTVEDLIKPRFKSLSEKSLSWISQGMS). The chain crosses the membrane as a helical span at residues 390–410 (VLYGALCIGMAALASLMGALL). Residues 411–415 (QAALS) are Extracellular-facing. The helical transmembrane segment at 416–436 (IFGMVGGPLLGLFSLGILVPF) threads the bilayer. At 437–439 (ANS) the chain is on the cytoplasmic side. A helical membrane pass occupies residues 440–460 (IGALTGLLAGFAISLWVGIGA). Residues 461–518 (QLYPPLPERTLPLPLETYGCNITHNGSDWMSTTEMPFSTSAFQIHNAERTPLMDNWYS) are Extracellular-facing. The N-linked (GlcNAc...) asparagine glycan is linked to N485. A helical transmembrane segment spans residues 519–539 (LSYLYFSTIGTLTTLFVGILI). Topologically, residues 540–611 (SLSTGGRKQN…HSGKINGTRL (72 aa)) are cytoplasmic. The short motif at 609–611 (TRL) is the PDZ-binding element.

It belongs to the sodium:solute symporter (SSF) (TC 2.A.21) family. As to quaternary structure, interacts (via PDZ-binding motif) with PDZK1 (via PDZ domains 1 and 3); interaction increases nicotinate transport activity of SLC5A8. Expressed in brain, colon, kidney and in the ileum and jejunum of small intestine. In the kidney, expression occurred in the proximal tubule and the loop of Henle, being restricted to tubular epithelial cells in both the cortex and the medulla. In the colon, predominantly expressed in the distal half of the large bowel and in the most terminal ileum. Localized selectively in the luminal surface of crypts in the large intestine and to the brush border in the middle parts of crypts in the cecum. In the brain, expression was seen throughout, exclusively in neurons, including the cortex, hippocampus, cerebellum and pituitary gland (at protein level). Expression is reduced in oligodendrogliomas.

Its subcellular location is the apical cell membrane. It carries out the reaction (S)-lactate(out) + 2 Na(+)(out) = (S)-lactate(in) + 2 Na(+)(in). The catalysed reaction is propanoate(out) + 2 Na(+)(out) = propanoate(in) + 2 Na(+)(in). The enzyme catalyses pyruvate(out) + 2 Na(+)(out) = pyruvate(in) + 2 Na(+)(in). It catalyses the reaction acetate(out) + 2 Na(+)(out) = acetate(in) + 2 Na(+)(in). It carries out the reaction butanoate(out) + 2 Na(+)(out) = butanoate(in) + 2 Na(+)(in). The catalysed reaction is nicotinate(out) + 2 Na(+)(out) = nicotinate(in) + 2 Na(+)(in). The enzyme catalyses (R)-3-hydroxybutanoate(out) + 2 Na(+)(out) = (R)-3-hydroxybutanoate(in) + 2 Na(+)(in). It catalyses the reaction acetoacetate(out) + 2 Na(+)(out) = acetoacetate(in) + 2 Na(+)(in). It carries out the reaction 4-methyl-2-oxopentanoate(out) + 2 Na(+)(out) = 4-methyl-2-oxopentanoate(in) + 2 Na(+)(in). The catalysed reaction is 5-oxo-L-proline(out) + 2 Na(+)(out) = 5-oxo-L-proline(in) + 2 Na(+)(in). The enzyme catalyses iodide(out) = iodide(in). It catalyses the reaction chloride(in) = chloride(out). It carries out the reaction nitrate(in) = nitrate(out). The catalysed reaction is bromide(in) = bromide(out). Its activity is regulated as follows. Transport of D-lactate and pyruvate stimulated by alpha-cyano-4-hydroxycinnamic acid, but inhibited by the short-chain fatty acids acetate, propionate and butyrate. Acts as an electrogenic sodium (Na(+)) and chloride (Cl-)-dependent sodium-coupled solute transporter, including transport of monocarboxylates (short-chain fatty acids including L-lactate, D-lactate, pyruvate, acetate, propionate, valerate and butyrate), mocarboxylate drugs (nicotinate, benzoate, salicylate and 5-aminosalicylate) and ketone bodies (beta-D-hydroxybutyrate, acetoacetate and alpha-ketoisocaproate), with a Na(+):substrate stoichiometry of between 4:1 and 2:1. Catalyzes passive carrier mediated diffusion of iodide. Mediates iodide transport from the thyrocyte into the colloid lumen through the apical membrane. May be responsible for the absorption of D-lactate and monocarboxylate drugs from the intestinal tract. May play a critical role in the entry of L-lactate and ketone bodies into neurons by a process driven by an electrochemical Na(+) gradient and hence contribute to the maintenance of the energy status and function of neurons. Mediates sodium-coupled electrogenic transport of pyroglutamate (5-oxo-L-proline). Can mediate the transport of chloride, bromide, iodide and nitrate ions when external concentration of sodium ions is reduced. The sequence is that of Sodium-coupled monocarboxylate transporter 1 from Mus musculus (Mouse).